The chain runs to 110 residues: MNRIKKGDTVVVISGKNKNKSGVVIQVNPKEQTALVEGVNKIKRHQKKDQTHEQSGIIEKEAPIRLCKLALVDPKGKDKGKATKVKYLLKDNKKVRVARKSGSELDVNKK.

It belongs to the universal ribosomal protein uL24 family. Part of the 50S ribosomal subunit.

In terms of biological role, one of two assembly initiator proteins, it binds directly to the 5'-end of the 23S rRNA, where it nucleates assembly of the 50S subunit. Functionally, one of the proteins that surrounds the polypeptide exit tunnel on the outside of the subunit. In Ureaplasma parvum serovar 3 (strain ATCC 27815 / 27 / NCTC 11736), this protein is Large ribosomal subunit protein uL24.